Reading from the N-terminus, the 422-residue chain is Inner membrane ALBINO3-like protein 2, chloroplastic (422 aa).

Residues 1-10 (MALQMKQSPS) show a composition bias toward polar residues. The segment at 1 to 22 (MALQMKQSPSMGVRRASQPVLP) is disordered. A helical transmembrane segment spans residues 65–85 (LYTLAEGGPIDVLAQFFEFVL). Topologically, residues 86-96 (QTLDEGLESAK) are stromal. The helical transmembrane segment at 97-117 (IPYSYGFAIIALTVLVKVATF) threads the bilayer. Over 118–166 (PLTQKQVESTLSLQALQPRVKELQAKYADDPENLQLETARLYKEAGVNP) the chain is Lumenal. The helical transmembrane segment at 167-187 (LAGCFPTLATIPVFIGLYNAL) threads the bilayer. Topologically, residues 188–225 (SNAAKEGLLTEGFFWIPSLGGPTTIGGGLEWLVPFENG) are stromal. Residues 226-246 (APPVGWANAAAYLVMPVLLVA) traverse the membrane as a helical segment. Residues 247–275 (SQYASQKIISSQNNQDPSQQQAQAILKFL) lie on the Lumenal side of the membrane. Residues 276 to 296 (PLMIGWFSLNVPSGLTLYWFV) form a helical membrane-spanning segment. Over 297–422 (NNLLSTGQQL…GSEEGKDNSA (126 aa)) the chain is Stromal. A disordered region spans residues 325-422 (TAGSSTPIVK…GSEEGKDNSA (98 aa)). Residues 334–350 (KPKEERVKKVTGKELGS) show a composition bias toward basic and acidic residues. A compositionally biased stretch (acidic residues) spans 358-367 (DGEEVEDVEV). Positions 368–380 (EVVSSGSSSSSGS) are enriched in low complexity. Basic and acidic residues predominate over residues 386–400 (RKGEKFRALKAREAA).

Belongs to the OXA1/ALB3/YidC (TC 2.A.9.2) family.

It is found in the plastid. The protein resides in the chloroplast thylakoid membrane. Required for the insertion of some light-harvesting complexes (LHC) proteins into the chloroplast thylakoid membrane. Essential for the assembly and activity of LHC I and II. Its function is probably partly distinct from that of ALB3.1. The protein is Inner membrane ALBINO3-like protein 2, chloroplastic (ALB3.2) of Chlamydomonas reinhardtii (Chlamydomonas smithii).